A 227-amino-acid chain; its full sequence is ATP synthase F(0) complex subunit a (227 aa).

The next 6 membrane-spanning stretches (helical) occupy residues tyrosine 13–alanine 33, tryptophan 69–leucine 89, glutamine 98–methionine 118, glutamate 132–isoleucine 152, valine 179–leucine 199, and leucine 202–tyrosine 222.

Belongs to the ATPase A chain family. In terms of assembly, component of the ATP synthase complex composed at least of ATP5F1A/subunit alpha, ATP5F1B/subunit beta, ATP5MC1/subunit c (homooctomer), MT-ATP6/subunit a, MT-ATP8/subunit 8, ATP5ME/subunit e, ATP5MF/subunit f, ATP5MG/subunit g, ATP5MK/subunit k, ATP5MJ/subunit j, ATP5F1C/subunit gamma, ATP5F1D/subunit delta, ATP5F1E/subunit epsilon, ATP5PF/subunit F6, ATP5PB/subunit b, ATP5PD/subunit d, ATP5PO/subunit OSCP. ATP synthase complex consists of a soluble F(1) head domain (subunits alpha(3) and beta(3)) - the catalytic core - and a membrane F(0) domain - the membrane proton channel (subunits c, a, 8, e, f, g, k and j). These two domains are linked by a central stalk (subunits gamma, delta, and epsilon) rotating inside the F1 region and a stationary peripheral stalk (subunits F6, b, d, and OSCP). Interacts with DNAJC30; interaction is direct.

The protein localises to the mitochondrion inner membrane. It carries out the reaction H(+)(in) = H(+)(out). In terms of biological role, subunit a, of the mitochondrial membrane ATP synthase complex (F(1)F(0) ATP synthase or Complex V) that produces ATP from ADP in the presence of a proton gradient across the membrane which is generated by electron transport complexes of the respiratory chain. ATP synthase complex consist of a soluble F(1) head domain - the catalytic core - and a membrane F(1) domain - the membrane proton channel. These two domains are linked by a central stalk rotating inside the F(1) region and a stationary peripheral stalk. During catalysis, ATP synthesis in the catalytic domain of F(1) is coupled via a rotary mechanism of the central stalk subunits to proton translocation. With the subunit c (ATP5MC1), forms the proton-conducting channel in the F(0) domain, that contains two crucial half-channels (inlet and outlet) that facilitate proton movement from the mitochondrial intermembrane space (IMS) into the matrix. Protons are taken up via the inlet half-channel and released through the outlet half-channel, following a Grotthuss mechanism. The chain is ATP synthase F(0) complex subunit a from Danio rerio (Zebrafish).